The primary structure comprises 378 residues: MNPRLRHWREAASVLLAAGAPGRRSPSPLGPCDYELLFLQRSSRSGFMPSAHVFPGGLVEAADFSAEWLRLLPAAPRCGLGAVRPPPPGGSRAPLFATDRQPLGSPLPGEVAFRICAIRETFEEAGILLLAPGGRPREGSGPAPSLPAEQLLPAAELGEWRRRVQEDPACFLQLCQRLGRVPDIWALQEWSNWLTPVGRAGRGGRRYDTAFYLCCLETRPPHTSQDNQEIAAFLWSSPPEAIERFKSQEIWLAPPQFYELCRLCNFSSLNDLHKFSSDRALEGCERWLPVTLTAADGFIQLLPGDELYPEDPDYTGEKKITMSTDKMVEDLMKEGSVFHRIVIKNTHSLAVYVNIQAKYKHMNPLMINTDSSNYNSRL.

In terms of domain architecture, Nudix hydrolase spans 7–258; it reads HWREAASVLL…EIWLAPPQFY (252 aa). The short motif at 105 to 126 is the Nudix box element; it reads SPLPGEVAFRICAIRETFEEAG. The Mg(2+) site is built by E120 and E124. Residues 376–378 carry the Microbody targeting signal motif; the sequence is SRL.

Belongs to the Nudix hydrolase family. Monomer. It depends on Mg(2+) as a cofactor. Mn(2+) serves as cofactor.

It localises to the peroxisome. The catalysed reaction is an acyl-CoA + H2O = an acyl-4'-phosphopantetheine + adenosine 3',5'-bisphosphate + 2 H(+). It catalyses the reaction CoA + H2O = (R)-4'-phosphopantetheine + adenosine 3',5'-bisphosphate + 2 H(+). The enzyme catalyses hexanoyl-CoA + H2O = hexanoyl-4'-phosphopantetheine + adenosine 3',5'-bisphosphate + 2 H(+). It carries out the reaction octanoyl-CoA + H2O = S-octanoyl-4'-phosphopantetheine + adenosine 3',5'-bisphosphate + 2 H(+). The catalysed reaction is butanoyl-CoA + H2O = S-butanoyl-4'-phosphopantetheine + adenosine 3',5'-bisphosphate + 2 H(+). It catalyses the reaction propanoyl-CoA + H2O = propanoyl-4'-phosphopantetheine + adenosine 3',5'-bisphosphate + 2 H(+). The enzyme catalyses malonyl-CoA + H2O = malonyl-4'-phosphopantetheine + adenosine 3',5'-bisphosphate + 2 H(+). It carries out the reaction succinyl-CoA + H2O = succinyl-4'-phosphopantetheine + adenosine 3',5'-bisphosphate + 2 H(+). The catalysed reaction is choloyl-CoA + H2O = S-choloyl-4'-phosphopantetheine + adenosine 3',5'-bisphosphate + 2 H(+). It catalyses the reaction 4,8-dimethylnonanoyl-CoA + H2O = S-(4,8-dimethylnonanoyl)-4'-phosphopantetheine + adenosine 3',5'-bisphosphate + 2 H(+). The enzyme catalyses (9Z,12Z,15Z)-octadecatrienoyl-CoA + H2O = S-(9Z,12Z,15Z-octadecatrienoyl)-4'-phosphopantetheine + adenosine 3',5'-bisphosphate + 2 H(+). It carries out the reaction (9Z,12Z)-octadecadienoyl-CoA + H2O = S-(9Z,12Z-octadecadienoyl)-4'-phosphopantetheine + adenosine 3',5'-bisphosphate + 2 H(+). The catalysed reaction is (9Z)-hexadecenoyl-CoA + H2O = S-(9Z-hexadecenoyl)-4'-phosphopantetheine + adenosine 3',5'-bisphosphate + 2 H(+). It catalyses the reaction (9Z)-tetradecenoyl-CoA + H2O = S-(9Z-tetradecenoyl)-4'-phosphopantetheine + adenosine 3',5'-bisphosphate + 2 H(+). The enzyme catalyses (6Z)-octenoyl-CoA + H2O = S-(6Z-octenoyl)-4'-phosphopantetheine + adenosine 3',5'-bisphosphate + 2 H(+). It carries out the reaction hexadecanoyl-CoA + H2O = S-hexadecanoyl-4'-phosphopantetheine + adenosine 3',5'-bisphosphate + 2 H(+). The catalysed reaction is tetradecanoyl-CoA + H2O = tetradecanoyl-4'-phosphopantetheine + adenosine 3',5'-bisphosphate + 2 H(+). It catalyses the reaction dodecanoyl-CoA + H2O = S-dodecanoyl-4'-phosphopantetheine + adenosine 3',5'-bisphosphate + 2 H(+). The enzyme catalyses a 5'-end CoA-ribonucleoside in mRNA + H2O = a 5'-end phospho-adenosine-phospho-ribonucleoside in mRNA + (R)-4'-phosphopantetheine + 2 H(+). In terms of biological role, fatty acyl-coenzyme A (CoA) diphosphatase that hydrolyzes fatty acyl-CoA to yield acyl-4'-phosphopantetheine and adenosine 3',5'-bisphosphate. Mediates the hydrolysis of a wide range of CoA esters, including choloyl-CoA and branched-chain fatty-acyl-CoA esters and at low substrate concentrations medium and long-chain fatty-acyl-CoA esters are the primary substrates. Highest activity seen with medium-chain acyl-CoA esters and higher rates of activity seen with the unsaturated acyl-CoA esters compared with the saturated esters. Exhibits decapping activity towards dpCoA-capped RNAs in vitro. This Gallus gallus (Chicken) protein is Acyl-coenzyme A diphosphatase NUDT19 (NUDT19).